Here is a 123-residue protein sequence, read N- to C-terminus: Methicillin resistance regulatory protein MecI (123 aa).

A DNA-binding region (H-T-H motif) is located at residues 7–71 (EISSAEWEFM…KDNKIFQYYS (65 aa)). Residues 74 to 123 (EESDIKYKTSKNFINKVYKGGFNSLVLNFVEKEDLSQDEIEELRNILNKK) form an important for dimerization region.

Belongs to the BlaI transcriptional regulatory family. In terms of assembly, monomer and homodimer. In terms of processing, upon exposure to beta-lactams, proteolytic cleavage at a single site impairs dimerization and abolishes repressor activity.

It localises to the cytoplasm. In terms of biological role, transcriptional repressor that constitutively blocks the transcription of the gene for the penicillin-binding protein MecA. Binds DNA as a dimer. This is Methicillin resistance regulatory protein MecI (mecI) from Staphylococcus aureus (strain Mu50 / ATCC 700699).